The primary structure comprises 244 residues: Capsid protein (244 aa).

Residues 1–24 (MSTSKRKRGDDANWNKRTTKKKPS) carry the Bipartite nuclear localization signal motif. The tract at residues 1–39 (MSTSKRKRGDDANWNKRTTKKKPSSAGLKKAGSKAERPS) is disordered.

This sequence belongs to the geminiviridae capsid protein family. Homomultimer. Interacts with the movement protein. Binds to single-stranded and double-stranded viral DNA.

The protein resides in the virion. It localises to the host nucleus. Encapsidates the viral genome into characteristic twinned ('geminate') particles. Binds the genomic viral ssDNA and shuttles it into and out of the cell nucleus. Plays a role in protection of the genome from degradation, virus acquisition and transmission by insect vectors, infectivity, and systemic movement. The CP of monopartite geminiviruses is absolutely essential for virus movement. This chain is Capsid protein, found in Maize streak virus genotype B (isolate Tas) (MSV).